The primary structure comprises 325 residues: Chain length determinant protein (325 aa).

Residues 1-31 (MRVENNNVSGQNHDPEQIDLIDLLVQLWRGK) lie on the Cytoplasmic side of the membrane. A helical membrane pass occupies residues 32-52 (MTIIISVIVAIALAIGYLAVA). Residues 53–294 (KEKWTSTAII…LPIRRDSPKK (242 aa)) are Periplasmic-facing. A helical transmembrane segment spans residues 295–315 (AITLILAVLLGGMVGAGIVLG). Over 316–325 (RNALRNYNAK) the chain is Cytoplasmic.

Belongs to the WzzB/Cld/Rol family.

The protein resides in the cell inner membrane. It functions in the pathway bacterial outer membrane biogenesis; lipopolysaccharide biosynthesis. Functionally, confers a modal distribution of chain length on the O-antigen component of lipopolysaccharide (LPS). Gives rise to a reduced number of short chain molecules and increases in numbers of longer molecules. The sequence is that of Chain length determinant protein (wzzB) from Shigella flexneri.